A 419-amino-acid polypeptide reads, in one-letter code: BTB/POZ domain-containing protein KCTD20 (419 aa).

The BTB domain maps to 117–191 (EKVTLLVDGT…YKTGIINCPD (75 aa)).

Interacts with AKT1; AKT2 and AKT3. Interacts with PPP2CA and PPP1CA. Part of a complex containing MARK4. As to expression, ubiquitously expressed.

The protein localises to the cytoplasm. In terms of biological role, promotes the phosphorylation of AKT family members. The polypeptide is BTB/POZ domain-containing protein KCTD20 (Kctd20) (Mus musculus (Mouse)).